Reading from the N-terminus, the 235-residue chain is MIDSLPAFWAVIPAAGVGARMAADRPKQYLQLGGRTILEHSLGCFLDHPSLKGLVVSLAVDDPYWPNLASASDPRIQRVDGGTERSGSVLNALLHLHAQGADDEDWVLVHDAARPNLSRDDLDKLLAELANDPVGGLLAVPAKDTLKRVDKHGRVVETVDRSVIWQAYTPQMFRLGALHRALADSLVAVAVITDEASAMEWAGMAPRLIEGRADNLKVTRPEDLEWLRQRWTNRR.

It belongs to the IspD/TarI cytidylyltransferase family. IspD subfamily.

The enzyme catalyses 2-C-methyl-D-erythritol 4-phosphate + CTP + H(+) = 4-CDP-2-C-methyl-D-erythritol + diphosphate. The protein operates within isoprenoid biosynthesis; isopentenyl diphosphate biosynthesis via DXP pathway; isopentenyl diphosphate from 1-deoxy-D-xylulose 5-phosphate: step 2/6. Its function is as follows. Catalyzes the formation of 4-diphosphocytidyl-2-C-methyl-D-erythritol from CTP and 2-C-methyl-D-erythritol 4-phosphate (MEP). The chain is 2-C-methyl-D-erythritol 4-phosphate cytidylyltransferase from Pseudomonas fluorescens (strain Pf0-1).